The sequence spans 544 residues: Chaperonin GroEL (544 aa).

ATP contacts are provided by residues 29 to 32, 86 to 90, Gly-413, 477 to 479, and Asp-493; these read TLGP, DGTTT, and DVL.

This sequence belongs to the chaperonin (HSP60) family. In terms of assembly, forms a cylinder of 14 subunits composed of two heptameric rings stacked back-to-back. Interacts with the co-chaperonin GroES.

It is found in the cytoplasm. The enzyme catalyses ATP + H2O + a folded polypeptide = ADP + phosphate + an unfolded polypeptide.. Its function is as follows. Together with its co-chaperonin GroES, plays an essential role in assisting protein folding. The GroEL-GroES system forms a nano-cage that allows encapsulation of the non-native substrate proteins and provides a physical environment optimized to promote and accelerate protein folding. This Clostridium kluyveri (strain NBRC 12016) protein is Chaperonin GroEL.